The primary structure comprises 353 residues: MRIEKDKELMNILKIMAPGTPLREGLENILRAKTGGLLILGDSDQILKLVDGGFKINSEYSPSYVYELAKMDGSIVLSSDLKKILCANAQLIPDSSIPTFETGTRHRTADRVAKQTGAIVIAISQRRNIITVYKGGIKYVLRDSSIILARANQALQTLEKYVAVLDRVVNNLNILEFKDIATLFDVVTAVQRSEMVMRIVSEIERYICELGNEGRLIDMQLSELIKSVEEDGILLIRDYCRSNMEYEDIYKQIQGLSSEELLNLDGLSKIIGYTGVPLVDTLISPRGYRMINKIPRIPSNVIENLVANFNQLKCVMEASYEQLDNVEGIGEARAKAIKNGLRRLREQIMLDKV.

Residues aspartate 6 to serine 144 enclose the DAC domain. ATP contacts are provided by residues glycine 73, leucine 91, and threonine 104–threonine 108.

The protein belongs to the DisA family. Homooctamer. Mg(2+) is required as a cofactor.

The enzyme catalyses 2 ATP = 3',3'-c-di-AMP + 2 diphosphate. Its function is as follows. Participates in a DNA-damage check-point that is active prior to asymmetric division when DNA is damaged. DisA forms globular foci that rapidly scan along the chromosomes during sporulation, searching for lesions. When a lesion is present, DisA pauses at the lesion site. This triggers a cellular response that culminates in a temporary block in sporulation initiation. Functionally, also has diadenylate cyclase activity, catalyzing the condensation of 2 ATP molecules into cyclic di-AMP (c-di-AMP). c-di-AMP acts as a signaling molecule that couples DNA integrity with progression of sporulation. The rise in c-di-AMP level generated by DisA while scanning the chromosome, operates as a positive signal that advances sporulation; upon encountering a lesion, the DisA focus arrests at the damaged site and halts c-di-AMP synthesis. The protein is DNA integrity scanning protein DisA of Clostridium botulinum (strain Kyoto / Type A2).